The sequence spans 519 residues: Voltage-gated potassium channel regulatory subunit KCNG4 (519 aa).

The disordered stretch occupies residues methionine 1–glutamine 25. The Cytoplasmic portion of the chain corresponds to methionine 1–leucine 218. The helical transmembrane segment at proline 219–valine 240 threads the bilayer. The Extracellular segment spans residues serine 241 to tyrosine 261. A helical membrane pass occupies residues isoleucine 262–glutamine 283. The Cytoplasmic segment spans residues alanine 284–proline 294. Residues leucine 295–glutamate 314 traverse the membrane as a helical segment. Residues glutamate 315 to tyrosine 328 are Extracellular-facing. Residues leucine 329–histidine 353 form a helical; Voltage-sensor membrane-spanning segment. The Cytoplasmic portion of the chain corresponds to serine 354–threonine 368. A helical membrane pass occupies residues arginine 369–tyrosine 390. At valine 391–isoleucine 405 the chain is on the extracellular side. The helical intramembrane region spans proline 406–threonine 417. The Selectivity filter motif lies at threonine 418 to aspartate 423. Residues threonine 418–valine 425 lie within the membrane without spanning it. At proline 426–glutamine 432 the chain is on the extracellular side. A helical transmembrane segment spans residues methionine 433–tyrosine 461. At leucine 462–methionine 519 the chain is on the cytoplasmic side.

This sequence belongs to the potassium channel family. G (TC 1.A.1.2) subfamily. Kv6.4/KCNG4 sub-subfamily. In terms of assembly, heterotetramer with KCNB1. Does not form homomultimer. As to expression, highly expressed in brain, and at lower levels in liver, small intestine and colon.

The protein localises to the cell membrane. Functionally, regulatory subunit of the voltage-gated potassium (Kv) channel which, when coassembled with KCNB1, modulates the kinetics parameters of the heterotetrameric channel namely the time course of activation, deactivation and inactivation and on the voltage-dependence of activation. Potassium channel subunit that does not form functional channels by itself. Reduces the deactivation rate. Modulates the threshold for activation by shifting by approximately 20 mV in hyperpolarizing direction. Markedly changes the inactivation by shifting the voltage dependence of inactivation by approximately 40 mV in hyperpolarizing direction. Acceleratee activation and enhances the time course of activation. This chain is Voltage-gated potassium channel regulatory subunit KCNG4, found in Homo sapiens (Human).